Reading from the N-terminus, the 248-residue chain is Protein FAM133A (248 aa).

The span at 68–80 (NWKKELEKSREKL) shows a compositional bias: basic and acidic residues. Residues 68–248 (NWKKELEKSR…KKSGSSHKSR (181 aa)) form a disordered region. Residues 90-102 (KRERKKKRKKKSC) show a composition bias toward basic residues. The segment covering 103–118 (RSSSSSSSSDSSSSSS) has biased composition (low complexity). Over residues 127 to 138 (QGKRRKKKKNRS) the composition is skewed to basic residues. 3 stretches are compositionally biased toward basic and acidic residues: residues 147-156 (HESESESKES), 163-175 (SKDE…DVRS), and 211-220 (RCEEREQAKE). Residues 221 to 248 (KVKKKKKKQHKKHSKKKKKKSGSSHKSR) show a composition bias toward basic residues.

It belongs to the FAM133 family.

The sequence is that of Protein FAM133A (FAM133A) from Homo sapiens (Human).